Here is a 607-residue protein sequence, read N- to C-terminus: Chaperone protein DnaK (607 aa).

Threonine 174 is subject to Phosphothreonine; by autocatalysis. The interval 577–607 (GYTASGPQGGPNPGGGQSGPDGNVNTDYKVY) is disordered. A compositionally biased stretch (gly residues) spans 583–595 (PQGGPNPGGGQSG).

The protein belongs to the heat shock protein 70 family.

Functionally, acts as a chaperone. The protein is Chaperone protein DnaK of Caldicellulosiruptor bescii (strain ATCC BAA-1888 / DSM 6725 / KCTC 15123 / Z-1320) (Anaerocellum thermophilum).